Here is a 60-residue protein sequence, read N- to C-terminus: Mastoparan-V (60 aa).

A signal peptide spans 1–27 (MKNTILILFTAFIALLGFFGMSAEALA). AXPX repeat units follow at residues 27–30 (ADPV), 31–34 (ADPL), 35–38 (AGPN), and 41–44 (ADPE). Positions 28–45 (DPVADPLAGPNAEADPEA) are excised as a propeptide. At Leu-59 the chain carries Leucine amide.

It belongs to the MCD family. Mastoparan subfamily. As to expression, expressed by the venom gland.

It is found in the secreted. The protein resides in the target cell membrane. Functionally, antimicrobial and mast cell degranulating peptide. Has broad spectrum antibacterial activity against both Gram-positive and Gram-negative bacteria (S.aureus MIC=32-64 ug/ml, S.xylosus MIC=3 ug/ml, S.alactolyticus MIC=16 ug/ml, C.koseri MIC=4 ug/ml, E.coli MIC=8 ug/ml, K.pneumoniae MIC=64 ug/ml, P.aerugiosa MIC=256 ug/ml, S.choleraesuis MIC=32 ug/ml, S.typhimurium MIC=32 ug/ml, V.parahamelytics MIC=32 ug/ml). Affects membrane permeability of E.coli. Shows hemolytic activities on sheep, chicken and human erythrocytes. Its mast cell degranulation activity may be related to the activation of G-protein coupled receptors in mast cells as well as interaction with other proteins located in cell endosomal membranes in the mast cells. The chain is Mastoparan-V from Vespa velutina flavitarsus (Asian hornet).